We begin with the raw amino-acid sequence, 501 residues long: Zinc finger C3HC-type protein 1 (501 aa).

At Ala2 the chain carries N-acetylalanine. Residues 21–73 (VVRSPEGTPQKVRELIDEGIVPEEGGTEPKDTAATFQSVDGSPQAEQSPLEST) are disordered. A Phosphoserine modification is found at Ser24. Thr28 carries the post-translational modification Phosphothreonine. Residues 54 to 72 (ATFQSVDGSPQAEQSPLES) show a composition bias toward polar residues. Phosphoserine occurs at positions 58, 62, and 68. A Phosphothreonine modification is found at Thr84. The C3HC-type zinc finger occupies 102–156 (CAKYGWVTVECDMLKCSSCQAFLCASLQPTFDFGRYKERCAELKKSLCSAHEKFC). Residues 302–421 (SPIPGVEGRP…TSPRSFFDPT (120 aa)) are disordered. 2 positions are modified to phosphoserine: Ser320 and Ser328. Over residues 326-338 (TRSQDATVSPGSE) the composition is skewed to polar residues. A Phosphothreonine modification is found at Thr332. Ser334, Ser337, Ser343, Ser353, Ser358, Ser369, and Ser380 each carry phosphoserine. 2 stretches are compositionally biased toward polar residues: residues 350–359 (RTRSWESSSP) and 369–383 (SPTT…SMGT). Position 383 is a phosphothreonine (Thr383). Ser394 carries the phosphoserine modification. The Nuclear localization signal signature appears at 395-401 (PLRRTKR). Phosphoserine occurs at positions 406 and 482. Residues 406–420 (SSSSSDTSPRSFFDP) show a composition bias toward low complexity.

Interacts with TPR; this interaction mediates ZC3HC1 nuclear envelopes (NE)-association but also required for proper positioning of a substantial amount of TPR at the nuclear basket (NB). Post-translationally, phosphorylated. May also be weakly phosphorylated on Tyr residues.

The protein resides in the nucleus. Its subcellular location is the nucleus envelope. Its function is as follows. Required for proper positioning of a substantial amount of TPR at the nuclear basket (NB) through interaction with TPR. This Mus musculus (Mouse) protein is Zinc finger C3HC-type protein 1 (Zc3hc1).